The following is a 366-amino-acid chain: 3-dehydroquinate synthase (366 aa).

NAD(+) is bound by residues 74 to 79, 108 to 112, 132 to 133, Lys144, Lys153, and 171 to 174; these read SGEAAK, GVVGD, TT, and FLRT. Residues Glu186, His249, and His266 each coordinate Zn(2+).

This sequence belongs to the sugar phosphate cyclases superfamily. Dehydroquinate synthase family. It depends on Co(2+) as a cofactor. Zn(2+) is required as a cofactor. The cofactor is NAD(+).

It is found in the cytoplasm. The enzyme catalyses 7-phospho-2-dehydro-3-deoxy-D-arabino-heptonate = 3-dehydroquinate + phosphate. It participates in metabolic intermediate biosynthesis; chorismate biosynthesis; chorismate from D-erythrose 4-phosphate and phosphoenolpyruvate: step 2/7. Its function is as follows. Catalyzes the conversion of 3-deoxy-D-arabino-heptulosonate 7-phosphate (DAHP) to dehydroquinate (DHQ). This Geobacillus kaustophilus (strain HTA426) protein is 3-dehydroquinate synthase.